Here is a 2028-residue protein sequence, read N- to C-terminus: Transient receptor potential cation channel subfamily M member 6 (2028 aa).

Residues M1 to K747 are Cytoplasmic-facing. A disordered region spans residues Q577 to L601. Over residues K580–K590 the composition is skewed to basic and acidic residues. The chain crosses the membrane as a helical span at residues N748–F768. Over K769–K847 the chain is Extracellular. The helical transmembrane segment at F848–V868 threads the bilayer. Over E869–M910 the chain is Cytoplasmic. A helical membrane pass occupies residues W911–F931. The Extracellular segment spans residues G932–R945. A helical transmembrane segment spans residues L946–N966. The Cytoplasmic segment spans residues Q967–K978. A helical membrane pass occupies residues M979–V999. The Extracellular segment spans residues A1000–D1018. Positions I1019–C1039 form an intramembrane region, pore-forming. The Extracellular segment spans residues S1040–P1053. A helical transmembrane segment spans residues F1054–C1074. The Cytoplasmic portion of the chain corresponds to F1075–L2028. Composition is skewed to basic and acidic residues over residues K1313–Q1323 and D1665–T1677. Disordered regions lie at residues K1313–H1339 and R1658–R1694. The segment covering S1682–R1694 has biased composition (low complexity). Position 1730 is a phosphothreonine; by autocatalysis (T1730). In terms of domain architecture, Alpha-type protein kinase spans T1756–L1986. Positions 1783, 1784, 1785, 1786, and 1810 each coordinate ADP. T1857 bears the Phosphothreonine; by autocatalysis mark. Positions 1882 and 1885 each coordinate ADP. Residue H1915 participates in Zn(2+) binding. D1929 serves as the catalytic Proton acceptor. D1939 contributes to the ADP binding site. Positions 1972, 1974, and 1978 each coordinate Zn(2+). Residues T2009–L2028 form a disordered region. Residues L2012 to L2028 show a composition bias toward basic and acidic residues.

It in the C-terminal section; belongs to the protein kinase superfamily. Alpha-type protein kinase family. ALPK subfamily. This sequence in the N-terminal section; belongs to the transient receptor (TC 1.A.4) family. LTrpC subfamily. TRPM6 sub-subfamily. In terms of assembly, forms heteromers with TRPM7; TRPM6 increases the current amplitude of TRPM6/7 heteromers as compared to TRPM7 homomers. Interacts (via kinase domain) with RACK1. Autophosphorylated; autophosphorylation controls the protein kinase activity of TRPM6 towards their substrates. Autophosphorylation of Thr-1857 in the kinase domain is essential for the inhibitory effect of RACK1. Post-translationally, the C-terminus of TRPM6 is proteolytically cleaved in vivo, in a cell type-specific fashion, releasing the kinase module from the transmembrane domain. The cleaved kinase fragments are translocated to the nucleus to phosphorylate histones and regulate gene expression.

It is found in the cell membrane. The protein localises to the apical cell membrane. It localises to the nucleus. The catalysed reaction is L-seryl-[protein] + ATP = O-phospho-L-seryl-[protein] + ADP + H(+). It carries out the reaction L-threonyl-[protein] + ATP = O-phospho-L-threonyl-[protein] + ADP + H(+). The enzyme catalyses Mg(2+)(in) = Mg(2+)(out). It catalyses the reaction Ca(2+)(in) = Ca(2+)(out). The catalysed reaction is Zn(2+)(in) = Zn(2+)(out). Strongly inhibited by intracellular Mg(2+); unlikely to be active at physiological levels of intracellular Mg(2+). In the heteromeric TRPM6-TRPM7 channels complexes, TRPM7 are able to offset the very high sensitivity of TRPM6 to cytosolic Mg(2+) to physiologically relevant concentrations, whereas TRPM6 relieve TRPM7 from the inhibitory action of Mg-ATP. Consequently, the association of TRPM6 with TRPM7 allow for high constitutive activity of TRPM6/7 in the presence of physiological levels of Mg(2+) and Mg-ATP. The kinase activity is controlled through the autophosphorylation of a serine/threonine-rich region located to the N-terminal of the catalytic domain. Bifunctional protein that combines an ion channel with an intrinsic kinase domain, enabling it to modulate cellular functions either by conducting ions through the pore or by phosphorylating downstream proteins via its kinase domain. Crucial for Mg(2+) homeostasis. Has an important role in epithelial magnesium transport and in the active Mg(2+) absorption in the gut and kidney. However, whether TRPM6 forms functional homomeric channels by itself or functions primarily as a subunit of heteromeric TRPM6-TRPM7 channels, is still under debate. Its function is as follows. The C-terminal kinase domain can be cleaved from the channel segment in a cell-type-specific fashion. The cleaved kinase fragments can translocate to the nucleus, and bind chromatin-remodeling complex proteins to ultimately phosphorylate specific Ser/Thr residues of histones known to be functionally important for cell differentiation and development. In Mus musculus (Mouse), this protein is Transient receptor potential cation channel subfamily M member 6 (Trpm6).